Here is a 205-residue protein sequence, read N- to C-terminus: UPF0301 protein Bind_0718 (205 aa).

Belongs to the UPF0301 (AlgH) family.

The sequence is that of UPF0301 protein Bind_0718 from Beijerinckia indica subsp. indica (strain ATCC 9039 / DSM 1715 / NCIMB 8712).